Here is a 173-residue protein sequence, read N- to C-terminus: Pectinesterase inhibitor 2 (173 aa).

A signal peptide spans 1–25 (MAAYLTNRVLMSSLMFFVMTGSLNA). Residues Cys34 and Cys43 are joined by a disulfide bond. Residues Asn39 and Asn63 are each glycosylated (N-linked (GlcNAc...) asparagine). Cys99 and Cys139 are oxidised to a cystine.

Belongs to the PMEI family. As to quaternary structure, interacts with PPME1. In terms of tissue distribution, highest expression in flowers. Expressed exclusively at the pollen tube tip.

It localises to the secreted. The protein localises to the extracellular space. It is found in the apoplast. Functionally, inhibits pectin methylesterase (PME) from flowers, siliques and pollen tube. The polypeptide is Pectinesterase inhibitor 2 (Arabidopsis thaliana (Mouse-ear cress)).